We begin with the raw amino-acid sequence, 546 residues long: (+)-epi-alpha-bisabolol synthase (546 aa).

Residues Asp297, Asp301, Asp441, Thr445, and Glu449 each contribute to the Mg(2+) site. A DDXXD motif motif is present at residues 297-301 (DDIYD).

Belongs to the terpene synthase family. Requires Mg(2+) as cofactor.

The catalysed reaction is (2E,6E)-farnesyl diphosphate + H2O = (+)-epi-alpha-bisabolol + diphosphate. It functions in the pathway secondary metabolite biosynthesis; terpenoid biosynthesis. Functionally, sesquiterpene synthase involved in the biosynthesis of (+)-epi-alpha-bisabolol, a precursor of the natural sweetner hernandulcin. The protein is (+)-epi-alpha-bisabolol synthase of Phyla dulcis (Aztec sweet herb).